A 567-amino-acid polypeptide reads, in one-letter code: Maltase A2 (567 aa).

Positions 1–23 are cleaved as a signal peptide; it reads MPKWAHLGLAALLLISTTQEGTA. N-linked (GlcNAc...) asparagine glycosylation is found at N30, N124, and N198. The active-site Nucleophile is the D226. The active-site Proton donor is the E298. A glycan (N-linked (GlcNAc...) asparagine) is linked at N312.

Belongs to the glycosyl hydrolase 13 family.

It carries out the reaction Hydrolysis of terminal, non-reducing (1-&gt;4)-linked alpha-D-glucose residues with release of alpha-D-glucose.. The chain is Maltase A2 (Mal-A2) from Drosophila melanogaster (Fruit fly).